Here is a 1026-residue protein sequence, read N- to C-terminus: DNA cross-link repair 1A protein (1026 aa).

Residues 1–189 are nuclear localization region; sequence MLEDTWEEEI…RDSKEPLGSP (189 aa). A disordered region spans residues 12 to 110; sequence EYKSKRKPKP…HRTRRGKQVT (99 aa). Residues 34–65 are compositionally biased toward basic and acidic residues; sequence SVEKSTDGKHQSKGNEKRTSENPGKTKDHKVC. The segment covering 71-82 has biased composition (low complexity); the sequence is SQISAGSSQSSS. Positions 98 to 107 are enriched in basic residues; that stretch reads KKQHRTRRGK. A UBZ4-type zinc finger spans residues 118–148; sequence DGYCPSCQMPFSSLLGQTPQWHVFECLDSPP. The Zn(2+) site is built by cysteine 121, cysteine 124, histidine 139, and cysteine 143. Glycyl lysine isopeptide (Lys-Gly) (interchain with G-Cter in SUMO2) cross-links involve residues lysine 359, lysine 434, and lysine 522. The nuclear focus formation stretch occupies residues 401–602; it reads SQEDLPHTDA…SSLSDLEFDA (202 aa). 3 disordered regions span residues 474-542, 560-590, and 602-651; these read PLEK…SKKV, ETSLRESASEGPNVSPVVSPNQKRPRLCKRK, and AKNL…PELG. Positions 527 to 540 are enriched in low complexity; sequence SPSSPKCSPSQPSK. A compositionally biased stretch (polar residues) spans 569–581; it reads EGPNVSPVVSPNQ. Phosphoserine occurs at positions 574 and 578. The segment covering 619–628 has biased composition (basic residues); that stretch reads RQHRRKRHKT. Residue lysine 657 forms a Glycyl lysine isopeptide (Lys-Gly) (interchain with G-Cter in SUMO2) linkage.

The protein belongs to the DNA repair metallo-beta-lactamase (DRMBL) family. Binds constitutively to TP53BP1. Binds CDC27, which is itself a component of the anaphase promoting complex (APC). Binds PIAS1.

The protein localises to the nucleus. It catalyses the reaction a beta-lactam + H2O = a substituted beta-amino acid. In terms of biological role, may be required for DNA interstrand cross-link repair. Also required for checkpoint mediated cell cycle arrest in early prophase in response to mitotic spindle poisons. This is DNA cross-link repair 1A protein (Dclre1a) from Mus musculus (Mouse).